A 760-amino-acid chain; its full sequence is Transferrin receptor protein 1 (760 aa).

The Cytoplasmic segment spans residues 1 to 65; it reads MMDQARSAFS…VTKPKRCGGS (65 aa). The tract at residues 1–67 is mediates interaction with SH3BP4; that stretch reads MMDQARSAFS…KPKRCGGSIC (67 aa). Ser10 and Ser19 each carry phosphoserine. Tyr20 is modified (phosphotyrosine). The Endocytosis signal signature appears at 20–23; that stretch reads YTRF. Thr21 is subject to Phosphothreonine. At Ser24 the chain carries Phosphoserine. Positions 58–61 match the Stop-transfer sequence motif; that stretch reads KPKR. S-palmitoyl cysteine attachment occurs at residues Cys62 and Cys67. A helical; Signal-anchor for type II membrane protein transmembrane segment spans residues 66–86; the sequence is ICYGTIAVIIFFLIGFMIGYL. Residues 87 to 760 lie on the Extracellular side of the membrane; the sequence is GYCKGVEPKT…GDVWDIDNEF (674 aa). The 91-residue stretch at 223 to 313 folds into the PA domain; sequence SKAATVTGKL…GTGDPYTPGF (91 aa). N-linked (GlcNAc...) asparagine glycosylation is found at Asn251 and Asn317. Residues 569-760 are ligand-binding; it reads TMDTYKELTE…GDVWDIDNEF (192 aa). Positions 646 to 648 match the Cell attachment site motif; that stretch reads RGD. N-linked (GlcNAc...) asparagine glycosylation is found at Asn722 and Asn727.

It belongs to the peptidase M28 family. M28B subfamily. Homodimer; disulfide-linked. Binds one transferrin or HFE molecule per subunit. Interacts with SH3BP4. Interacts with STEAP3; facilitates TFRC endocytosis in erythroid precursor cells. Stearoylated by ZDHHC6 which inhibits TFRC-mediated activation of the JNK pathway and promotes mitochondrial fragmentation. Stearoylation does not affect iron uptake.

Its subcellular location is the cell membrane. The protein resides in the melanosome. Functionally, cellular uptake of iron occurs via receptor-mediated endocytosis of ligand-occupied transferrin receptor into specialized endosomes. Endosomal acidification leads to iron release. The apotransferrin-receptor complex is then recycled to the cell surface with a return to neutral pH and the concomitant loss of affinity of apotransferrin for its receptor. Transferrin receptor is necessary for development of erythrocytes and the nervous system. Positively regulates T and B cell proliferation through iron uptake. Acts as a lipid sensor that regulates mitochondrial fusion by regulating activation of the JNK pathway. When dietary levels of stearate (C18:0) are low, promotes activation of the JNK pathway, resulting in HUWE1-mediated ubiquitination and subsequent degradation of the mitofusin MFN2 and inhibition of mitochondrial fusion. When dietary levels of stearate (C18:0) are high, TFRC stearoylation inhibits activation of the JNK pathway and thus degradation of the mitofusin MFN2. Mediates uptake of NICOL1 into fibroblasts where it may regulate extracellular matrix production. In Pongo abelii (Sumatran orangutan), this protein is Transferrin receptor protein 1 (TFRC).